The chain runs to 351 residues: N-acetyl-gamma-glutamyl-phosphate reductase (351 aa).

Residue Cys-154 is part of the active site.

It belongs to the NAGSA dehydrogenase family. Type 1 subfamily.

The protein localises to the cytoplasm. It catalyses the reaction N-acetyl-L-glutamate 5-semialdehyde + phosphate + NADP(+) = N-acetyl-L-glutamyl 5-phosphate + NADPH + H(+). It functions in the pathway amino-acid biosynthesis; L-arginine biosynthesis; N(2)-acetyl-L-ornithine from L-glutamate: step 3/4. Its function is as follows. Catalyzes the NADPH-dependent reduction of N-acetyl-5-glutamyl phosphate to yield N-acetyl-L-glutamate 5-semialdehyde. The sequence is that of N-acetyl-gamma-glutamyl-phosphate reductase from Prochlorococcus marinus (strain MIT 9515).